The primary structure comprises 472 residues: Glutamate--tRNA ligase 2 (472 aa).

Positions P12 to N22 match the 'HIGH' region motif. Residues P253–R257 carry the 'KMSKS' region motif. Residue K256 coordinates ATP.

It belongs to the class-I aminoacyl-tRNA synthetase family. Glutamate--tRNA ligase type 1 subfamily. In terms of assembly, monomer.

The protein resides in the cytoplasm. It catalyses the reaction tRNA(Glu) + L-glutamate + ATP = L-glutamyl-tRNA(Glu) + AMP + diphosphate. Its function is as follows. Catalyzes the attachment of glutamate to tRNA(Glu) in a two-step reaction: glutamate is first activated by ATP to form Glu-AMP and then transferred to the acceptor end of tRNA(Glu). This Nitrosococcus oceani (strain ATCC 19707 / BCRC 17464 / JCM 30415 / NCIMB 11848 / C-107) protein is Glutamate--tRNA ligase 2.